We begin with the raw amino-acid sequence, 31 residues long: Photosystem II reaction center protein T (31 aa).

The helical transmembrane segment at 3 to 23 threads the bilayer; the sequence is ALVYTFLLVTTLGILFFSIIF.

Belongs to the PsbT family. As to quaternary structure, PSII is composed of 1 copy each of membrane proteins PsbA, PsbB, PsbC, PsbD, PsbE, PsbF, PsbH, PsbI, PsbJ, PsbK, PsbL, PsbM, PsbT, PsbX, PsbY, PsbZ, Psb30/Ycf12, at least 3 peripheral proteins of the oxygen-evolving complex and a large number of cofactors. It forms dimeric complexes.

It is found in the plastid. It localises to the cyanelle thylakoid membrane. Found at the monomer-monomer interface of the photosystem II (PS II) dimer, plays a role in assembly and dimerization of PSII. PSII is a light-driven water plastoquinone oxidoreductase, using light energy to abstract electrons from H(2)O, generating a proton gradient subsequently used for ATP formation. The chain is Photosystem II reaction center protein T from Cyanophora paradoxa.